A 399-amino-acid chain; its full sequence is S-adenosylmethionine synthase (399 aa).

Position 15 (H15) interacts with ATP. Position 17 (D17) interacts with Mg(2+). Residue E43 participates in K(+) binding. Positions 56 and 99 each coordinate L-methionine. Positions 99 to 109 (QSPDIAGGVDH) are flexible loop. Residues 175–177 (DAK), 242–243 (RF), D251, 257–258 (RK), A274, and K278 each bind ATP. D251 contributes to the L-methionine binding site. K282 contributes to the L-methionine binding site.

This sequence belongs to the AdoMet synthase family. Homotetramer; dimer of dimers. Mg(2+) is required as a cofactor. It depends on K(+) as a cofactor.

The protein localises to the cytoplasm. The catalysed reaction is L-methionine + ATP + H2O = S-adenosyl-L-methionine + phosphate + diphosphate. The protein operates within amino-acid biosynthesis; S-adenosyl-L-methionine biosynthesis; S-adenosyl-L-methionine from L-methionine: step 1/1. Catalyzes the formation of S-adenosylmethionine (AdoMet) from methionine and ATP. The overall synthetic reaction is composed of two sequential steps, AdoMet formation and the subsequent tripolyphosphate hydrolysis which occurs prior to release of AdoMet from the enzyme. The sequence is that of S-adenosylmethionine synthase from Lactobacillus helveticus (strain DPC 4571).